The sequence spans 665 residues: Transketolase 1 (665 aa).

Position 26 (His-26) interacts with substrate. Residues His-66 and 114–116 (GPL) contribute to the thiamine diphosphate site. Asp-155 is a Mg(2+) binding site. Gly-156 and Asn-185 together coordinate thiamine diphosphate. Residues Asn-185 and Ile-187 each contribute to the Mg(2+) site. Positions 261, 358, and 385 each coordinate substrate. Thiamine diphosphate is bound at residue His-261. Glu-412 functions as the Proton donor in the catalytic mechanism. Phe-438 is a binding site for thiamine diphosphate. Positions 462, 470, and 521 each coordinate substrate.

This sequence belongs to the transketolase family. Homodimer. Requires Mg(2+) as cofactor. Ca(2+) is required as a cofactor. The cofactor is Mn(2+). It depends on Co(2+) as a cofactor. Thiamine diphosphate serves as cofactor.

It catalyses the reaction D-sedoheptulose 7-phosphate + D-glyceraldehyde 3-phosphate = aldehydo-D-ribose 5-phosphate + D-xylulose 5-phosphate. Functionally, catalyzes the transfer of a two-carbon ketol group from a ketose donor to an aldose acceptor, via a covalent intermediate with the cofactor thiamine pyrophosphate. The chain is Transketolase 1 (tkt1) from Vibrio cholerae serotype O1 (strain ATCC 39315 / El Tor Inaba N16961).